A 351-amino-acid chain; its full sequence is Ribosomal RNA large subunit methyltransferase M (351 aa).

Residues Ser-183, 216–219 (APGG), Asp-235, Asp-255, and Asp-271 contribute to the S-adenosyl-L-methionine site. Residue Lys-300 is the Proton acceptor of the active site.

The protein belongs to the class I-like SAM-binding methyltransferase superfamily. RNA methyltransferase RlmE family. RlmM subfamily. In terms of assembly, monomer.

It localises to the cytoplasm. The enzyme catalyses cytidine(2498) in 23S rRNA + S-adenosyl-L-methionine = 2'-O-methylcytidine(2498) in 23S rRNA + S-adenosyl-L-homocysteine + H(+). Functionally, catalyzes the 2'-O-methylation at nucleotide C2498 in 23S rRNA. The chain is Ribosomal RNA large subunit methyltransferase M from Ectopseudomonas mendocina (strain ymp) (Pseudomonas mendocina).